Consider the following 800-residue polypeptide: Phenylalanine--tRNA ligase beta subunit (800 aa).

One can recognise a tRNA-binding domain in the interval 39–147 (FDAIADIVVG…QDSVPGVRLV (109 aa)). The 77-residue stretch at 401–477 (WQAAQLRFRP…RVYGMDNIPP (77 aa)) folds into the B5 domain. Mg(2+) contacts are provided by D455, D461, E464, and E465. In terms of domain architecture, FDX-ACB spans 706 to 800 (PVFPPVKRDI…SLTEALGVRI (95 aa)).

The protein belongs to the phenylalanyl-tRNA synthetase beta subunit family. Type 1 subfamily. As to quaternary structure, tetramer of two alpha and two beta subunits. It depends on Mg(2+) as a cofactor.

It is found in the cytoplasm. It catalyses the reaction tRNA(Phe) + L-phenylalanine + ATP = L-phenylalanyl-tRNA(Phe) + AMP + diphosphate + H(+). The sequence is that of Phenylalanine--tRNA ligase beta subunit from Oleidesulfovibrio alaskensis (strain ATCC BAA-1058 / DSM 17464 / G20) (Desulfovibrio alaskensis).